A 721-amino-acid polypeptide reads, in one-letter code: 1,4-alpha-glucan branching enzyme GlgB (721 aa).

Residue Asp-400 is the Nucleophile of the active site. Glu-453 acts as the Proton donor in catalysis.

It belongs to the glycosyl hydrolase 13 family. GlgB subfamily. In terms of assembly, monomer.

The catalysed reaction is Transfers a segment of a (1-&gt;4)-alpha-D-glucan chain to a primary hydroxy group in a similar glucan chain.. It functions in the pathway glycan biosynthesis; glycogen biosynthesis. In terms of biological role, catalyzes the formation of the alpha-1,6-glucosidic linkages in glycogen by scission of a 1,4-alpha-linked oligosaccharide from growing alpha-1,4-glucan chains and the subsequent attachment of the oligosaccharide to the alpha-1,6 position. The sequence is that of 1,4-alpha-glucan branching enzyme GlgB from Chlamydia felis (strain Fe/C-56) (Chlamydophila felis).